Consider the following 351-residue polypeptide: Sulfate/thiosulfate import ATP-binding protein CysA (351 aa).

Residues 3 to 237 (ITVRNLHKRF…PRSAFVYEFL (235 aa)) form the ABC transporter domain. 35-42 (GPSGCGKT) serves as a coordination point for ATP.

Belongs to the ABC transporter superfamily. Sulfate/tungstate importer (TC 3.A.1.6) family. In terms of assembly, the complex is composed of two ATP-binding proteins (CysA), two transmembrane proteins (CysT and CysW) and a solute-binding protein (CysP).

The protein resides in the cell inner membrane. It carries out the reaction sulfate(out) + ATP + H2O = sulfate(in) + ADP + phosphate + H(+). The enzyme catalyses thiosulfate(out) + ATP + H2O = thiosulfate(in) + ADP + phosphate + H(+). In terms of biological role, part of the ABC transporter complex CysAWTP involved in sulfate/thiosulfate import. Responsible for energy coupling to the transport system. The chain is Sulfate/thiosulfate import ATP-binding protein CysA from Burkholderia pseudomallei (strain K96243).